The chain runs to 50 residues: Large ribosomal subunit protein bL33 (50 aa).

Belongs to the bacterial ribosomal protein bL33 family.

The polypeptide is Large ribosomal subunit protein bL33 (Mycoplasmopsis synoviae (strain 53) (Mycoplasma synoviae)).